We begin with the raw amino-acid sequence, 309 residues long: Ribonuclease Z (309 aa).

Zn(2+) contacts are provided by His-63, His-65, Asp-67, His-68, His-145, Asp-216, and His-274. The active-site Proton acceptor is the Asp-67.

It belongs to the RNase Z family. Homodimer. It depends on Zn(2+) as a cofactor.

It catalyses the reaction Endonucleolytic cleavage of RNA, removing extra 3' nucleotides from tRNA precursor, generating 3' termini of tRNAs. A 3'-hydroxy group is left at the tRNA terminus and a 5'-phosphoryl group is left at the trailer molecule.. In terms of biological role, zinc phosphodiesterase, which displays some tRNA 3'-processing endonuclease activity. Probably involved in tRNA maturation, by removing a 3'-trailer from precursor tRNA. The chain is Ribonuclease Z from Streptococcus suis (strain 98HAH33).